The following is a 259-amino-acid chain: Carbonic anhydrase 1 (259 aa).

Alanine 1 bears the N-acetylalanine mark. Residues 2 to 258 (HAWGYGPTDG…LKGRHVRASF (257 aa)) enclose the Alpha-carbonic anhydrase domain. The active-site Proton donor/acceptor is the histidine 63. Positions 93, 95, and 118 each coordinate Zn(2+). Residues threonine 197 and 197 to 198 (TT) contribute to the substrate site.

The protein belongs to the alpha-carbonic anhydrase family. Zn(2+) serves as cofactor.

The protein localises to the cytoplasm. The catalysed reaction is hydrogencarbonate + H(+) = CO2 + H2O. Catalyzes the reversible hydration of carbon dioxide. This Chionodraco hamatus (Antarctic teleost icefish) protein is Carbonic anhydrase 1 (ca1).